The following is a 153-amino-acid chain: Protein-export protein SecB (153 aa).

Belongs to the SecB family. As to quaternary structure, homotetramer, a dimer of dimers. One homotetramer interacts with 1 SecA dimer.

It is found in the cytoplasm. In terms of biological role, one of the proteins required for the normal export of preproteins out of the cell cytoplasm. It is a molecular chaperone that binds to a subset of precursor proteins, maintaining them in a translocation-competent state. It also specifically binds to its receptor SecA. The protein is Protein-export protein SecB of Erwinia tasmaniensis (strain DSM 17950 / CFBP 7177 / CIP 109463 / NCPPB 4357 / Et1/99).